Consider the following 458-residue polypeptide: Phosphoglucosamine mutase (458 aa).

The active-site Phosphoserine intermediate is the Ser-108. The Mg(2+) site is built by Ser-108, Asp-247, Asp-249, and Asp-251. Position 108 is a phosphoserine (Ser-108).

The protein belongs to the phosphohexose mutase family. Mg(2+) is required as a cofactor. Post-translationally, activated by phosphorylation.

The enzyme catalyses alpha-D-glucosamine 1-phosphate = D-glucosamine 6-phosphate. Its function is as follows. Catalyzes the conversion of glucosamine-6-phosphate to glucosamine-1-phosphate. This is Phosphoglucosamine mutase from Nitrosomonas europaea (strain ATCC 19718 / CIP 103999 / KCTC 2705 / NBRC 14298).